The following is a 414-amino-acid chain: Serine/threonine transporter SstT (414 aa).

8 helical membrane passes run 22–42 (GLVL…TIGF), 54–74 (IFVK…VMAA), 89–109 (IIVL…IAGF), 148–168 (AIFK…GLAL), 189–209 (IVHV…AETL), 223–243 (LLAV…PILV), 305–325 (MAGA…TLGL), and 337–357 (IVAA…LLLI).

It belongs to the dicarboxylate/amino acid:cation symporter (DAACS) (TC 2.A.23) family.

Its subcellular location is the cell inner membrane. The catalysed reaction is L-serine(in) + Na(+)(in) = L-serine(out) + Na(+)(out). The enzyme catalyses L-threonine(in) + Na(+)(in) = L-threonine(out) + Na(+)(out). Functionally, involved in the import of serine and threonine into the cell, with the concomitant import of sodium (symport system). The sequence is that of Serine/threonine transporter SstT from Haemophilus influenzae (strain 86-028NP).